We begin with the raw amino-acid sequence, 179 residues long: MHLYTQTLNTVTGLLANEGSFGLNLDIFEANLINIVILGGGIFKLGSTALSESLAERQQKIVGAIQESEERLEQAVTKLTESEKQLAQAQLVITSLKEEAEATAKQVKSGILTDGKAEIERLTASAKGQIGTIEKKIRKEISEYVVTLALQRVTLQLEGKLDVNLQQQIIDKNISKLEG.

The chain crosses the membrane as a helical span at residues 35 to 51 (IVILGGGIFKLGSTALS).

This sequence belongs to the ATPase B chain family. In terms of assembly, F-type ATPases have 2 components, F(1) - the catalytic core - and F(0) - the membrane proton channel. F(1) has five subunits: alpha(3), beta(3), gamma(1), delta(1), epsilon(1). F(0) has four main subunits: a(1), b(1), b'(1) and c(10-14). The alpha and beta chains form an alternating ring which encloses part of the gamma chain. F(1) is attached to F(0) by a central stalk formed by the gamma and epsilon chains, while a peripheral stalk is formed by the delta, b and b' chains.

The protein localises to the plastid. It is found in the chloroplast thylakoid membrane. Functionally, f(1)F(0) ATP synthase produces ATP from ADP in the presence of a proton or sodium gradient. F-type ATPases consist of two structural domains, F(1) containing the extramembraneous catalytic core and F(0) containing the membrane proton channel, linked together by a central stalk and a peripheral stalk. During catalysis, ATP synthesis in the catalytic domain of F(1) is coupled via a rotary mechanism of the central stalk subunits to proton translocation. Component of the F(0) channel, it forms part of the peripheral stalk, linking F(1) to F(0). The protein is ATP synthase subunit b, chloroplastic of Emiliania huxleyi (Coccolithophore).